Reading from the N-terminus, the 342-residue chain is S-adenosylmethionine:tRNA ribosyltransferase-isomerase (342 aa).

Belongs to the QueA family. As to quaternary structure, monomer.

It is found in the cytoplasm. It catalyses the reaction 7-aminomethyl-7-carbaguanosine(34) in tRNA + S-adenosyl-L-methionine = epoxyqueuosine(34) in tRNA + adenine + L-methionine + 2 H(+). It participates in tRNA modification; tRNA-queuosine biosynthesis. Its function is as follows. Transfers and isomerizes the ribose moiety from AdoMet to the 7-aminomethyl group of 7-deazaguanine (preQ1-tRNA) to give epoxyqueuosine (oQ-tRNA). The protein is S-adenosylmethionine:tRNA ribosyltransferase-isomerase of Streptococcus pneumoniae serotype 4 (strain ATCC BAA-334 / TIGR4).